Here is a 232-residue protein sequence, read N- to C-terminus: Small ribosomal subunit protein uS3 (232 aa).

The 69-residue stretch at Ile-39–Arg-107 folds into the KH type-2 domain.

The protein belongs to the universal ribosomal protein uS3 family. Part of the 30S ribosomal subunit. Forms a tight complex with proteins S10 and S14.

Binds the lower part of the 30S subunit head. Binds mRNA in the 70S ribosome, positioning it for translation. In Rhodopseudomonas palustris (strain HaA2), this protein is Small ribosomal subunit protein uS3.